A 496-amino-acid polypeptide reads, in one-letter code: Sugar transporter ERD6 (496 aa).

Helical transmembrane passes span Val58–Phe78, Val94–Phe114, Met128–Ala148, Leu156–Ile176, Gly183–Ile203, and Leu211–Pro231. A Phosphoserine modification is found at Ser256. Helical transmembrane passes span Tyr292–Val312, Ile329–Val349, Ala364–Leu384, Ile394–Ile414, Leu430–Leu450, and Gly456–Val476.

This sequence belongs to the major facilitator superfamily. Sugar transporter (TC 2.A.1.1) family. As to expression, expressed in both shoots and roots. In roots, expressed in epidermal cells and especially strongly in cortex cells. In flowers, expressed in sepals.

Its subcellular location is the membrane. In terms of biological role, sugar transporter. This Arabidopsis thaliana (Mouse-ear cress) protein is Sugar transporter ERD6 (ERD6).